Consider the following 348-residue polypeptide: Holliday junction branch migration complex subunit RuvB (348 aa).

Residues 4–184 (TDRLIAASGR…FGIVQRLEFY (181 aa)) are large ATPase domain (RuvB-L). ATP is bound by residues I23, R24, G65, K68, T69, T70, 131 to 133 (EDF), R174, Y184, and R221. T69 lines the Mg(2+) pocket. The interval 185–255 (SNKDLATIVS…VADMALNLLD (71 aa)) is small ATPAse domain (RuvB-S). The head domain (RuvB-H) stretch occupies residues 258–348 (ERGFDHSDRR…GGEYAAQDDE (91 aa)). The DNA site is built by R294, R313, and R318.

It belongs to the RuvB family. As to quaternary structure, homohexamer. Forms an RuvA(8)-RuvB(12)-Holliday junction (HJ) complex. HJ DNA is sandwiched between 2 RuvA tetramers; dsDNA enters through RuvA and exits via RuvB. An RuvB hexamer assembles on each DNA strand where it exits the tetramer. Each RuvB hexamer is contacted by two RuvA subunits (via domain III) on 2 adjacent RuvB subunits; this complex drives branch migration. In the full resolvosome a probable DNA-RuvA(4)-RuvB(12)-RuvC(2) complex forms which resolves the HJ.

It localises to the cytoplasm. The catalysed reaction is ATP + H2O = ADP + phosphate + H(+). The RuvA-RuvB-RuvC complex processes Holliday junction (HJ) DNA during genetic recombination and DNA repair, while the RuvA-RuvB complex plays an important role in the rescue of blocked DNA replication forks via replication fork reversal (RFR). RuvA specifically binds to HJ cruciform DNA, conferring on it an open structure. The RuvB hexamer acts as an ATP-dependent pump, pulling dsDNA into and through the RuvAB complex. RuvB forms 2 homohexamers on either side of HJ DNA bound by 1 or 2 RuvA tetramers; 4 subunits per hexamer contact DNA at a time. Coordinated motions by a converter formed by DNA-disengaged RuvB subunits stimulates ATP hydrolysis and nucleotide exchange. Immobilization of the converter enables RuvB to convert the ATP-contained energy into a lever motion, pulling 2 nucleotides of DNA out of the RuvA tetramer per ATP hydrolyzed, thus driving DNA branch migration. The RuvB motors rotate together with the DNA substrate, which together with the progressing nucleotide cycle form the mechanistic basis for DNA recombination by continuous HJ branch migration. Branch migration allows RuvC to scan DNA until it finds its consensus sequence, where it cleaves and resolves cruciform DNA. This chain is Holliday junction branch migration complex subunit RuvB, found in Pseudomonas entomophila (strain L48).